The following is a 162-amino-acid chain: 2-C-methyl-D-erythritol 2,4-cyclodiphosphate synthase (162 aa).

A divalent metal cation contacts are provided by Asp12 and His14. Residues 12 to 14 and 38 to 39 contribute to the 4-CDP-2-C-methyl-D-erythritol 2-phosphate site; these read DVH and HS. His46 is a binding site for a divalent metal cation. Residues 60–62, 65–69, Phe143, and Arg146 contribute to the 4-CDP-2-C-methyl-D-erythritol 2-phosphate site; these read DIG and FPDTD.

The protein belongs to the IspF family. In terms of assembly, homotrimer. It depends on a divalent metal cation as a cofactor.

It catalyses the reaction 4-CDP-2-C-methyl-D-erythritol 2-phosphate = 2-C-methyl-D-erythritol 2,4-cyclic diphosphate + CMP. It functions in the pathway isoprenoid biosynthesis; isopentenyl diphosphate biosynthesis via DXP pathway; isopentenyl diphosphate from 1-deoxy-D-xylulose 5-phosphate: step 4/6. Its function is as follows. Involved in the biosynthesis of isopentenyl diphosphate (IPP) and dimethylallyl diphosphate (DMAPP), two major building blocks of isoprenoid compounds. Catalyzes the conversion of 4-diphosphocytidyl-2-C-methyl-D-erythritol 2-phosphate (CDP-ME2P) to 2-C-methyl-D-erythritol 2,4-cyclodiphosphate (ME-CPP) with a corresponding release of cytidine 5-monophosphate (CMP). This Azoarcus sp. (strain BH72) protein is 2-C-methyl-D-erythritol 2,4-cyclodiphosphate synthase.